A 158-amino-acid polypeptide reads, in one-letter code: NAD(P)H-quinone oxidoreductase subunit N (158 aa).

Belongs to the complex I NdhN subunit family. In terms of assembly, NDH-1 can be composed of about 15 different subunits; different subcomplexes with different compositions have been identified which probably have different functions.

Its subcellular location is the cellular thylakoid membrane. The catalysed reaction is a plastoquinone + NADH + (n+1) H(+)(in) = a plastoquinol + NAD(+) + n H(+)(out). It carries out the reaction a plastoquinone + NADPH + (n+1) H(+)(in) = a plastoquinol + NADP(+) + n H(+)(out). NDH-1 shuttles electrons from an unknown electron donor, via FMN and iron-sulfur (Fe-S) centers, to quinones in the respiratory and/or the photosynthetic chain. The immediate electron acceptor for the enzyme in this species is believed to be plastoquinone. Couples the redox reaction to proton translocation, and thus conserves the redox energy in a proton gradient. Cyanobacterial NDH-1 also plays a role in inorganic carbon-concentration. The chain is NAD(P)H-quinone oxidoreductase subunit N from Trichodesmium erythraeum (strain IMS101).